The chain runs to 388 residues: GTPase Obg (388 aa).

Positions 1–159 (MKFIDEASIR…RSLRLELLLL (159 aa)) constitute an Obg domain. The OBG-type G domain occupies 160-333 (ADVGLLGMPN…LSLKLLDYIA (174 aa)). GTP contacts are provided by residues 166-173 (GMPNAGKS), 191-195 (FTTLV), 213-216 (DIPG), 283-286 (NKTD), and 314-316 (SAF). Positions 173 and 193 each coordinate Mg(2+).

Belongs to the TRAFAC class OBG-HflX-like GTPase superfamily. OBG GTPase family. As to quaternary structure, monomer. The cofactor is Mg(2+).

The protein resides in the cytoplasm. Functionally, an essential GTPase which binds GTP, GDP and possibly (p)ppGpp with moderate affinity, with high nucleotide exchange rates and a fairly low GTP hydrolysis rate. Plays a role in control of the cell cycle, stress response, ribosome biogenesis and in those bacteria that undergo differentiation, in morphogenesis control. The polypeptide is GTPase Obg (Shewanella denitrificans (strain OS217 / ATCC BAA-1090 / DSM 15013)).